A 458-amino-acid chain; its full sequence is ATP synthase subunit beta 2 (458 aa).

148-155 is an ATP binding site; the sequence is GGAGVGKT.

The protein belongs to the ATPase alpha/beta chains family. In terms of assembly, F-type ATPases have 2 components, CF(1) - the catalytic core - and CF(0) - the membrane proton channel. CF(1) has five subunits: alpha(3), beta(3), gamma(1), delta(1), epsilon(1). CF(0) has three main subunits: a(1), b(2) and c(9-12). The alpha and beta chains form an alternating ring which encloses part of the gamma chain. CF(1) is attached to CF(0) by a central stalk formed by the gamma and epsilon chains, while a peripheral stalk is formed by the delta and b chains.

It is found in the cell inner membrane. The catalysed reaction is ATP + H2O + 4 H(+)(in) = ADP + phosphate + 5 H(+)(out). Functionally, produces ATP from ADP in the presence of a proton gradient across the membrane. The catalytic sites are hosted primarily by the beta subunits. This Marinomonas sp. (strain MWYL1) protein is ATP synthase subunit beta 2.